Here is a 318-residue protein sequence, read N- to C-terminus: Dimethyladenosine transferase (318 aa).

The S-adenosyl-L-methionine site is built by His-37, Leu-39, Gly-64, Glu-85, Asp-113, and Asn-128.

Belongs to the class I-like SAM-binding methyltransferase superfamily. rRNA adenine N(6)-methyltransferase family.

The protein resides in the cytoplasm. Its subcellular location is the nucleus. The protein localises to the nucleolus. The catalysed reaction is adenosine(1779)/adenosine(1780) in 18S rRNA + 4 S-adenosyl-L-methionine = N(6)-dimethyladenosine(1779)/N(6)-dimethyladenosine(1780) in 18S rRNA + 4 S-adenosyl-L-homocysteine + 4 H(+). In terms of biological role, specifically dimethylates two adjacent adenosines in the loop of a conserved hairpin near the 3'-end of 18S rRNA in the 40S particle. The sequence is that of Dimethyladenosine transferase from Saccharomyces cerevisiae (strain ATCC 204508 / S288c) (Baker's yeast).